The chain runs to 545 residues: CWF19-like protein 1 homolog (545 aa).

Positions 306–329 are disordered; the sequence is YFYDMDGGRRKRQGGDNNKRDKRP.

Belongs to the CWF19 family.

The protein is CWF19-like protein 1 homolog of Drosophila melanogaster (Fruit fly).